We begin with the raw amino-acid sequence, 135 residues long: NADPH-dependent 7-cyano-7-deazaguanine reductase (135 aa).

The active-site Thioimide intermediate is Cys-48. Asp-55 serves as the catalytic Proton donor. Residues 70-72 (LEL) and 89-90 (HE) contribute to the substrate site.

It belongs to the GTP cyclohydrolase I family. QueF type 1 subfamily.

It is found in the cytoplasm. It carries out the reaction 7-aminomethyl-7-carbaguanine + 2 NADP(+) = 7-cyano-7-deazaguanine + 2 NADPH + 3 H(+). It functions in the pathway tRNA modification; tRNA-queuosine biosynthesis. Functionally, catalyzes the NADPH-dependent reduction of 7-cyano-7-deazaguanine (preQ0) to 7-aminomethyl-7-deazaguanine (preQ1). This is NADPH-dependent 7-cyano-7-deazaguanine reductase from Prochlorococcus marinus (strain SARG / CCMP1375 / SS120).